The chain runs to 42 residues: Photosystem I reaction center subunit IX (42 aa).

A helical transmembrane segment spans residues 7–27 (YLSTAPVLAAIWFGILAGLLI).

This sequence belongs to the PsaJ family.

Its subcellular location is the plastid. The protein resides in the chloroplast thylakoid membrane. In terms of biological role, may help in the organization of the PsaE and PsaF subunits. The polypeptide is Photosystem I reaction center subunit IX (Staurastrum punctulatum (Green alga)).